The chain runs to 312 residues: MSAAPQHVTVLLAEAVEALAIRPGGVYVDGTFGRGGHSRAILAKLDADGRLIAFDRDPRAIEVARALPDPRLTAVHAPFSAFAEELDRLGLEHVDGVLLDLGVSSPQLDEAARGMSFRFDAPLDMRMDTSRGQTVAQWLADASVAQITEVLRDYGEERFAYAIAKAIAAARAGGAVASTRQLAEIVEKAVRTREPGQHPATRSFQALRIFINQELEELSLVLPAAVERLKPGGRLVAISFHSLEDRIVKRFMRDESRPPQLPSRLPLRAAELPQPRLRLVGKSQRPGPGEVAANPRSRSAVMRVAERTGGAA.

S-adenosyl-L-methionine-binding positions include 35–37 (GGH), aspartate 55, phenylalanine 79, aspartate 100, and glutamine 107. Residues 279-312 (LVGKSQRPGPGEVAANPRSRSAVMRVAERTGGAA) form a disordered region.

It belongs to the methyltransferase superfamily. RsmH family.

It is found in the cytoplasm. The catalysed reaction is cytidine(1402) in 16S rRNA + S-adenosyl-L-methionine = N(4)-methylcytidine(1402) in 16S rRNA + S-adenosyl-L-homocysteine + H(+). Its function is as follows. Specifically methylates the N4 position of cytidine in position 1402 (C1402) of 16S rRNA. The polypeptide is Ribosomal RNA small subunit methyltransferase H (Aromatoleum aromaticum (strain DSM 19018 / LMG 30748 / EbN1) (Azoarcus sp. (strain EbN1))).